A 788-amino-acid chain; its full sequence is Calpastatin (788 aa).

The segment covering 1-11 has biased composition (pro residues); sequence MSQPGPKPAAS. Disordered regions lie at residues 1–262, 289–493, and 514–580; these read MSQP…TGPV, LLEK…MCSI, and TLAG…SQEQ. Serine 11 is subject to Phosphoserine. Residues 12–21 show a composition bias toward low complexity; that stretch reads PRPSRGAAAR. The segment covering 38–49 has biased composition (basic and acidic residues); sequence PGEKKGSDEKKA. Residues 65–87 show a composition bias toward low complexity; sequence AATATKVTASSAATSKSPSMSTT. Basic and acidic residues predominate over residues 99–119; the sequence is EGPDQKRPREQAVKTESKKPQ. Lysine 112 is covalently cross-linked (Glycyl lysine isopeptide (Lys-Gly) (interchain with G-Cter in SUMO2)). Residue lysine 129 is modified to N6-acetyllysine. A Phosphoserine modification is found at serine 165. Position 216 is a phosphothreonine (threonine 216). Serine 219 carries the post-translational modification Phosphoserine. Residues 246–256 are compositionally biased toward basic and acidic residues; that stretch reads GGHEDTNRDDP. Residues 251–303 form an Inhibitory domain 1 repeat; sequence TNRDDPPYTGPVVLDPMYSTYLEALGIKEGTIPPEYRKLLEKNEGITQPLPDS. Residues serine 303 and serine 324 each carry the phosphoserine modification. Composition is skewed to polar residues over residues 318–328 and 369–380; these read SDFTCSSPTGK and QALQALSDSLGT. One copy of the Inhibitory domain 2 repeat lies at 384–436; it reads DPPSHVSQAEQVKEAKAKEERQEKCGEDEDTVPAEYRLKPAKDKDGKPLLPEP. 2 stretches are compositionally biased toward basic and acidic residues: residues 394 to 408 and 419 to 430; these read QVKE…QEKC and YRLKPAKDKDGK. The segment covering 441–453 has biased composition (low complexity); the sequence is KSLSESELIGELS. Phosphoserine occurs at positions 444, 446, and 453. Threonine 479 bears the Phosphothreonine mark. At serine 518 the chain carries Phosphoserine. Over residues 522–570 the composition is skewed to basic and acidic residues; the sequence is READPEHEKTVEDKVKEKAKEEEHEKLGEKEETVPPDYRLEEVKDKDGK. Residues 524 to 577 form an Inhibitory domain 3 repeat; the sequence is ADPEHEKTVEDKVKEKAKEEEHEKLGEKEETVPPDYRLEEVKDKDGKPLLPKES. 4 positions are modified to phosphoserine: serine 594, serine 605, serine 653, and serine 655. Residues 620-788 form a disordered region; that stretch reads VVSQTPAPST…PKAKEDARHS (169 aa). The stretch at 661–714 is one Inhibitory domain 4 repeat; it reads PDPDENKPLDDKVKEKIKPEHSEKLGERDDTIPPEYRHLLDNDGKDKPEKPPTK. Composition is skewed to basic and acidic residues over residues 661-726 and 759-788; these read PDPD…RDPI and ASKD…ARHS.

Belongs to the protease inhibitor I27 (calpastatin) family. In terms of tissue distribution, isoform 2 is the major form in all tissues examined. Isoform 1 accounts for 5-10% in tissues such as skeletal muscle, liver and brain, and 30% in myoblasts. Isoforms 4 and 5 are testis-specific. Isoform 6 is highly expressed in heart and skeletal muscle with lower levels in liver, brain and testis. Isoform 7 is expressed at high levels in liver.

Its function is as follows. Specific inhibition of calpain (calcium-dependent cysteine protease). Plays a key role in postmortem tenderization of meat and have been proposed to be involved in muscle protein degradation in living tissue. This Mus musculus (Mouse) protein is Calpastatin (Cast).